Here is a 287-residue protein sequence, read N- to C-terminus: Ribonuclease Z (287 aa).

The Zn(2+) site is built by histidine 64, histidine 66, aspartate 68, histidine 69, histidine 124, aspartate 191, and histidine 250. Aspartate 68 (proton acceptor) is an active-site residue.

The protein belongs to the RNase Z family. Homodimer. It depends on Zn(2+) as a cofactor.

The catalysed reaction is Endonucleolytic cleavage of RNA, removing extra 3' nucleotides from tRNA precursor, generating 3' termini of tRNAs. A 3'-hydroxy group is left at the tRNA terminus and a 5'-phosphoryl group is left at the trailer molecule.. In terms of biological role, zinc phosphodiesterase, which displays some tRNA 3'-processing endonuclease activity. Probably involved in tRNA maturation, by removing a 3'-trailer from precursor tRNA. This Pyrobaculum arsenaticum (strain DSM 13514 / JCM 11321 / PZ6) protein is Ribonuclease Z.